Reading from the N-terminus, the 236-residue chain is H2HPP isomerase (236 aa).

2 consecutive Cupin type-1 domains span residues 40–106 (YVPP…AIDI) and 151–215 (NIPG…SKSV). The a divalent metal cation site is built by His-50, His-52, Gln-56, His-91, His-162, His-164, Gln-168, and His-202. A substrate-binding site is contributed by Tyr-223.

In terms of assembly, monomer. It depends on Fe(2+) as a cofactor. Requires Co(2+) as cofactor.

It localises to the cytoplasm. It catalyses the reaction 3-[(4R)-4-hydroxycyclohexa-1,5-dien-1-yl]-2-oxopropanoate = 3-[(1E,4R)-4-hydroxycyclohex-2-en-1-ylidene]pyruvate. Its pathway is antibiotic biosynthesis; bacilysin biosynthesis. Part of the bacABCDEF operon responsible for the biosynthesis of the nonribosomally synthesized dipeptide antibiotic bacilysin, composed of L-alanine and L-anticapsin. Bacilysin is an irreversible inactivator of the glutaminase domain of glucosamine synthetase. BacB catalyzes the allylic isomerization of the endocyclic-delta(4),delta(8)-7R-dihydro-hydroxyphenylpyruvate (en-H2HPP) to generate a mixture of 3E,7R- and 3Z, 7R-olefins of the exocyclic-delta(3),delta(5)-dihydro-hydroxyphenylpyruvate (ex-H2HPP). The polypeptide is H2HPP isomerase (Bacillus subtilis).